A 228-amino-acid chain; its full sequence is 7-cyano-7-deazaguanine synthase (228 aa).

Residue 7–17 (LSGGLDSSTAL) coordinates ATP. 4 residues coordinate Zn(2+): C190, C202, C205, and C208.

This sequence belongs to the QueC family. Zn(2+) is required as a cofactor.

It catalyses the reaction 7-carboxy-7-deazaguanine + NH4(+) + ATP = 7-cyano-7-deazaguanine + ADP + phosphate + H2O + H(+). The protein operates within purine metabolism; 7-cyano-7-deazaguanine biosynthesis. Functionally, catalyzes the ATP-dependent conversion of 7-carboxy-7-deazaguanine (CDG) to 7-cyano-7-deazaguanine (preQ(0)). This chain is 7-cyano-7-deazaguanine synthase, found in Acaryochloris marina (strain MBIC 11017).